The chain runs to 67 residues: Large ribosomal subunit protein bL35 (67 aa).

A compositionally biased stretch (basic residues) spans 1–16 (MPKMKTKSSAKKRFRV). The disordered stretch occupies residues 1–24 (MPKMKTKSSAKKRFRVRPGGTVKR).

This sequence belongs to the bacterial ribosomal protein bL35 family.

The sequence is that of Large ribosomal subunit protein bL35 from Paracidovorax citrulli (strain AAC00-1) (Acidovorax citrulli).